The sequence spans 501 residues: Protein DETOXIFICATION 37 (501 aa).

The next 12 helical transmembrane spans lie at 44–64 (MMIEMKFLFHLAAPAIFVYVI), 84–104 (LAAASLGNSGFNMFTYGLLLG), 134–154 (VVLILTCLPMSFLFLFSNPIL), 163–183 (VATLASVFVYGMIPVIFAYAV), 200–220 (SAYISAATLVIHLILSWIAVY), 222–242 (LGYGLLALSLIHSFSWWIIVV), 280–300 (AVMLCLESWYSQILVLLAGLL), 310–330 (LAICMSISAISFMVSVGFNAA), 352–372 (VVTTGVSFLLSVFEAIVVLSW), 396–416 (FLAITIVLNGIQPVLSGVAVG), 422–442 (FVAYVNIGCYYVVGIPVGFVL), and 453–473 (IWTGMIGGTLMQTIILVIVTL).

This sequence belongs to the multi antimicrobial extrusion (MATE) (TC 2.A.66.1) family.

Its subcellular location is the membrane. The polypeptide is Protein DETOXIFICATION 37 (Arabidopsis thaliana (Mouse-ear cress)).